The sequence spans 367 residues: Protein TlpB (367 aa).

Transmembrane regions (helical) follow at residues 15–35 (ILIS…SPYF), 53–73 (IIAP…GILI), 83–103 (IIPI…YVTF), 124–144 (IQAI…FFLL), and 153–173 (FYVV…LAPI).

The protein localises to the membrane. The sequence is that of Protein TlpB (tlpB) from Flavobacterium psychrophilum.